Reading from the N-terminus, the 200-residue chain is 7-methyl-GTP pyrophosphatase (200 aa).

Catalysis depends on D69, which acts as the Proton acceptor.

The protein belongs to the Maf family. YceF subfamily. A divalent metal cation serves as cofactor.

The protein resides in the cytoplasm. The catalysed reaction is N(7)-methyl-GTP + H2O = N(7)-methyl-GMP + diphosphate + H(+). Its function is as follows. Nucleoside triphosphate pyrophosphatase that hydrolyzes 7-methyl-GTP (m(7)GTP). May have a dual role in cell division arrest and in preventing the incorporation of modified nucleotides into cellular nucleic acids. The chain is 7-methyl-GTP pyrophosphatase from Colwellia psychrerythraea (strain 34H / ATCC BAA-681) (Vibrio psychroerythus).